The following is a 266-amino-acid chain: Enterotoxin type C-1 (266 aa).

A signal peptide spans methionine 1–alanine 27. Cysteines 120 and 137 form a disulfide.

It belongs to the staphylococcal/streptococcal toxin family. In terms of assembly, interacts with host MHC class II molecules composed of alpha/HLA-DRA and beta/HLA-DRB1 chains.

Its subcellular location is the secreted. Functionally, staphylococcal enterotoxin that activates the host immune system by binding as unprocessed molecules to major histocompatibility (MHC) complex class II and T-cell receptor (TCR) molecules. In turn, this ternary complex activates a large number of T-lymphocytes initiating a systemic release of pro-inflammatory cytokines. Inhibits SEC1-mediated T-cell activation in the absence of MHC class II by competing with SEC1 for binding to the host TCR. Also causes the intoxication staphylococcal food poisoning syndrome. The polypeptide is Enterotoxin type C-1 (entC1) (Staphylococcus aureus).